Here is a 779-residue protein sequence, read N- to C-terminus: Probable ATP-dependent RNA helicase DHX40 (779 aa).

A disordered region spans residues 1 to 53; that stretch reads MSRFPAVAGRAPRRQEEGERSRDLQEERPSAVCIADREEKGCTSQEGGTTPTF. The span at 13-41 shows a compositional bias: basic and acidic residues; that stretch reads RRQEEGERSRDLQEERPSAVCIADREEKG. Over residues 42 to 53 the composition is skewed to polar residues; sequence CTSQEGGTTPTF. The region spanning 63–231 is the Helicase ATP-binding domain; the sequence is IQAVRDNSFL…FGNCPIFDIP (169 aa). 76 to 83 serves as a coordination point for ATP; that stretch reads GNTGSGKT. The DEAH box motif lies at 173 to 176; that stretch reads DEAH. The Helicase C-terminal domain maps to 263–442; the sequence is TMDIHLNEMA…SVVLTLKCLA (180 aa). The tract at residues 737–779 is disordered; it reads SKDVLKKMQRRNDDKSISDARARFLERKQQRTQDHSDTRKETG.

The protein belongs to the DEAD box helicase family. DEAH subfamily.

It carries out the reaction ATP + H2O = ADP + phosphate + H(+). In terms of biological role, probable ATP-dependent RNA helicase. This is Probable ATP-dependent RNA helicase DHX40 (DHX40) from Pongo abelii (Sumatran orangutan).